A 488-amino-acid polypeptide reads, in one-letter code: MTELHYLTVSAAHTALAAGELTAVELTEACLARINATEPQIRAFLHLTPEAALAAARAADERRRRGQALSPLDGIPIGIKDVICTNGVPTTAGSRILAGFRPPYNATVIERLLAAGTVLIGKLNCDEFAMGSSTENSAYQITTNPWDTSRVPGGSSGGSAAAVAAGQVPATLGTDTGGSIRQPAALCGISGLKPTYGRVSRYGLIAYGSSLDQIGPMAWTVADLALIMNVIAGHDPRDGTSAPLPTPDYTAALTGDIRGLRIGIPREYFVEGMEPGVEAATRTAIEVLREQGATLVEVSLPHTKYALPTYYIIAPAEASANLARFDGVRYGFRAEGETMWEQIEQTRGQGFGPEVRRRIMLGTYALSAGYYDAYYRRAQQVRTLIKRDFDQVFNEVDLLATPTSPTVAFPIGQKINDPLAMYLSDVCTLPINLAGVPALVVPCGFSDGLPVGLQLIGRPFDEATLLRVGDAYQRVTDWHTRRPDLARA.

Residues Lys-80 and Ser-155 each act as charge relay system in the active site. Ser-179 acts as the Acyl-ester intermediate in catalysis.

It belongs to the amidase family. GatA subfamily. As to quaternary structure, heterotrimer of A, B and C subunits.

It carries out the reaction L-glutamyl-tRNA(Gln) + L-glutamine + ATP + H2O = L-glutaminyl-tRNA(Gln) + L-glutamate + ADP + phosphate + H(+). Its function is as follows. Allows the formation of correctly charged Gln-tRNA(Gln) through the transamidation of misacylated Glu-tRNA(Gln) in organisms which lack glutaminyl-tRNA synthetase. The reaction takes place in the presence of glutamine and ATP through an activated gamma-phospho-Glu-tRNA(Gln). The chain is Glutamyl-tRNA(Gln) amidotransferase subunit A from Chloroflexus aggregans (strain MD-66 / DSM 9485).